The primary structure comprises 568 residues: 2-succinyl-5-enolpyruvyl-6-hydroxy-3-cyclohexene-1-carboxylate synthase (568 aa).

This sequence belongs to the TPP enzyme family. MenD subfamily. As to quaternary structure, homodimer. Requires Mg(2+) as cofactor. It depends on Mn(2+) as a cofactor. Thiamine diphosphate is required as a cofactor.

The catalysed reaction is isochorismate + 2-oxoglutarate + H(+) = 5-enolpyruvoyl-6-hydroxy-2-succinyl-cyclohex-3-ene-1-carboxylate + CO2. It participates in quinol/quinone metabolism; 1,4-dihydroxy-2-naphthoate biosynthesis; 1,4-dihydroxy-2-naphthoate from chorismate: step 2/7. The protein operates within quinol/quinone metabolism; menaquinone biosynthesis. Its function is as follows. Catalyzes the thiamine diphosphate-dependent decarboxylation of 2-oxoglutarate and the subsequent addition of the resulting succinic semialdehyde-thiamine pyrophosphate anion to isochorismate to yield 2-succinyl-5-enolpyruvyl-6-hydroxy-3-cyclohexene-1-carboxylate (SEPHCHC). The protein is 2-succinyl-5-enolpyruvyl-6-hydroxy-3-cyclohexene-1-carboxylate synthase of Haemophilus influenzae (strain PittEE).